Reading from the N-terminus, the 344-residue chain is Fructose-1,6-bisphosphatase class 1 (344 aa).

Positions 92, 115, 117, and 118 each coordinate Mg(2+). Substrate-binding positions include 118–121, N211, Y244, and K274; that span reads DGSS. Residue E280 participates in Mg(2+) binding.

The protein belongs to the FBPase class 1 family. As to quaternary structure, homotetramer. Requires Mg(2+) as cofactor.

The protein resides in the cytoplasm. The catalysed reaction is beta-D-fructose 1,6-bisphosphate + H2O = beta-D-fructose 6-phosphate + phosphate. It functions in the pathway carbohydrate biosynthesis; gluconeogenesis. In Aeromonas hydrophila subsp. hydrophila (strain ATCC 7966 / DSM 30187 / BCRC 13018 / CCUG 14551 / JCM 1027 / KCTC 2358 / NCIMB 9240 / NCTC 8049), this protein is Fructose-1,6-bisphosphatase class 1.